A 233-amino-acid polypeptide reads, in one-letter code: Large ribosomal subunit protein uL1 (233 aa).

The protein belongs to the universal ribosomal protein uL1 family. Part of the 50S ribosomal subunit.

In terms of biological role, binds directly to 23S rRNA. The L1 stalk is quite mobile in the ribosome, and is involved in E site tRNA release. Its function is as follows. Protein L1 is also a translational repressor protein, it controls the translation of the L11 operon by binding to its mRNA. The sequence is that of Large ribosomal subunit protein uL1 from Photobacterium profundum (strain SS9).